Reading from the N-terminus, the 216-residue chain is Transmembrane emp24 domain-containing protein eca (216 aa).

The first 20 residues, 1-20 (MRDQILSLALLLCVLHSACG), serve as a signal peptide directing secretion. The Lumenal portion of the chain corresponds to 21-182 (LYFHISETER…FRHTSESTNS (162 aa)). Residues 30-126 (RKCFIEEVPD…QLRVHLDIQV (97 aa)) form the GOLD domain. The stretch at 134–164 (ANVAQKEKLTELQLRIRQLLDQVEQITKEQN) forms a coiled coil. A helical transmembrane segment spans residues 183-203 (RVLWWSLAQTVVLVCMGFWQM). The Cytoplasmic portion of the chain corresponds to 204 to 216 (RHLKSFFEAKKLV). The short motif at 213 to 216 (KKLV) is the Prevents secretion from ER element.

The protein belongs to the EMP24/GP25L family.

The protein resides in the endoplasmic reticulum membrane. Eca and bai are essential, though not redundant, for dorsoventral patterning of the embryo. Specifically required during early embryogenesis for the activity of maternal tkv, while the zygotic tkv is not affected. Involved in Golgi organization. This is Transmembrane emp24 domain-containing protein eca from Drosophila ananassae (Fruit fly).